Consider the following 258-residue polypeptide: Ubiquinone/menaquinone biosynthesis C-methyltransferase UbiE (258 aa).

The segment at 1-21 (MPESRTSADGGMETSYGFREV) is disordered. Residues threonine 81, aspartate 102, and 130 to 131 (NA) each bind S-adenosyl-L-methionine.

It belongs to the class I-like SAM-binding methyltransferase superfamily. MenG/UbiE family.

The enzyme catalyses a 2-demethylmenaquinol + S-adenosyl-L-methionine = a menaquinol + S-adenosyl-L-homocysteine + H(+). The catalysed reaction is a 2-methoxy-6-(all-trans-polyprenyl)benzene-1,4-diol + S-adenosyl-L-methionine = a 5-methoxy-2-methyl-3-(all-trans-polyprenyl)benzene-1,4-diol + S-adenosyl-L-homocysteine + H(+). It participates in quinol/quinone metabolism; menaquinone biosynthesis; menaquinol from 1,4-dihydroxy-2-naphthoate: step 2/2. Its pathway is cofactor biosynthesis; ubiquinone biosynthesis. Its function is as follows. Methyltransferase required for the conversion of demethylmenaquinol (DMKH2) to menaquinol (MKH2) and the conversion of 2-polyprenyl-6-methoxy-1,4-benzoquinol (DDMQH2) to 2-polyprenyl-3-methyl-6-methoxy-1,4-benzoquinol (DMQH2). The sequence is that of Ubiquinone/menaquinone biosynthesis C-methyltransferase UbiE from Rhizobium leguminosarum bv. trifolii (strain WSM2304).